The following is a 163-amino-acid chain: Phosphopantetheine adenylyltransferase (163 aa).

Residue threonine 11 coordinates substrate. ATP-binding positions include 11–12 (TF) and histidine 19. Positions 43, 75, and 89 each coordinate substrate. Residues 90-92 (GLR), glutamate 100, and 125-131 (YSFISST) contribute to the ATP site.

It belongs to the bacterial CoaD family. Homohexamer. Requires Mg(2+) as cofactor.

The protein localises to the cytoplasm. The enzyme catalyses (R)-4'-phosphopantetheine + ATP + H(+) = 3'-dephospho-CoA + diphosphate. It participates in cofactor biosynthesis; coenzyme A biosynthesis; CoA from (R)-pantothenate: step 4/5. Functionally, reversibly transfers an adenylyl group from ATP to 4'-phosphopantetheine, yielding dephospho-CoA (dPCoA) and pyrophosphate. The chain is Phosphopantetheine adenylyltransferase from Acinetobacter baumannii (strain SDF).